Here is a 334-residue protein sequence, read N- to C-terminus: Glycerol-3-phosphate dehydrogenase [NAD(P)+] (334 aa).

Residues W13, R33, and K106 each coordinate NADPH. Positions 106, 137, and 139 each coordinate sn-glycerol 3-phosphate. A141 is an NADPH binding site. Sn-glycerol 3-phosphate contacts are provided by K192, D245, S255, R256, and N257. The Proton acceptor role is filled by K192. Residue R256 coordinates NADPH. NADPH is bound by residues V280 and E282.

It belongs to the NAD-dependent glycerol-3-phosphate dehydrogenase family.

It localises to the cytoplasm. It carries out the reaction sn-glycerol 3-phosphate + NAD(+) = dihydroxyacetone phosphate + NADH + H(+). It catalyses the reaction sn-glycerol 3-phosphate + NADP(+) = dihydroxyacetone phosphate + NADPH + H(+). Its pathway is membrane lipid metabolism; glycerophospholipid metabolism. Its function is as follows. Catalyzes the reduction of the glycolytic intermediate dihydroxyacetone phosphate (DHAP) to sn-glycerol 3-phosphate (G3P), the key precursor for phospholipid synthesis. This Chlamydia pneumoniae (Chlamydophila pneumoniae) protein is Glycerol-3-phosphate dehydrogenase [NAD(P)+].